The sequence spans 453 residues: Putative F-box/FBD/LRR-repeat protein At1g66290 (453 aa).

The interval methionine 1–valine 28 is disordered. Positions serine 14–glycine 23 are enriched in polar residues. The F-box domain maps to valine 28–phenylalanine 81. LRR repeat units lie at residues serine 155 to leucine 179, leucine 210 to serine 235, alanine 246 to serine 269, leucine 305 to proline 329, and cysteine 358 to glutamate 381. One can recognise an FBD domain in the interval arginine 373–leucine 423.

This chain is Putative F-box/FBD/LRR-repeat protein At1g66290, found in Arabidopsis thaliana (Mouse-ear cress).